Here is a 155-residue protein sequence, read N- to C-terminus: SsrA-binding protein (155 aa).

This sequence belongs to the SmpB family.

It localises to the cytoplasm. Required for rescue of stalled ribosomes mediated by trans-translation. Binds to transfer-messenger RNA (tmRNA), required for stable association of tmRNA with ribosomes. tmRNA and SmpB together mimic tRNA shape, replacing the anticodon stem-loop with SmpB. tmRNA is encoded by the ssrA gene; the 2 termini fold to resemble tRNA(Ala) and it encodes a 'tag peptide', a short internal open reading frame. During trans-translation Ala-aminoacylated tmRNA acts like a tRNA, entering the A-site of stalled ribosomes, displacing the stalled mRNA. The ribosome then switches to translate the ORF on the tmRNA; the nascent peptide is terminated with the 'tag peptide' encoded by the tmRNA and targeted for degradation. The ribosome is freed to recommence translation, which seems to be the essential function of trans-translation. The protein is SsrA-binding protein of Chelativorans sp. (strain BNC1).